The chain runs to 453 residues: 13-hydroxylupanine O-tigloyltransferase (453 aa).

Catalysis depends on proton acceptor residues histidine 166 and aspartate 385.

It belongs to the plant acyltransferase family. Monomer. In terms of tissue distribution, expressed in roots and hypocotyls. Detected in seeds, leaves and cotyledons, but not in young developing leaves.

It carries out the reaction 13-hydroxylupanine + (2E)-2-methylbut-2-enoyl-CoA = 13-(2-methylcrotonoyloxy)lupanine + CoA. Its activity is regulated as follows. Inhibited by N-ethylmaleimide, p-chloromercuribenzoic acid and diethylpyrocarbonate (DEPC). Its function is as follows. Acyl-CoA-dependent acyltransferase involved in the synthesis of lupanine alkaloids. Can use both (-)-13alpha-hydroxymultiflorine and (+)-13alpha-hydroxylupanine as substrates. Lower activity with (-)-3beta, 13alpha-dihydroxylupanine, but no activity with (+)-epilupinine and (-)-lupinine as substrates. Tigloyl-CoA, benzoyl-CoA and, more slowly, acetyl-CoA, propionyl-CoA and 2-butenoyl-CoA can act as acyl donors. This Lupinus albus (White lupine) protein is 13-hydroxylupanine O-tigloyltransferase (HMT/HLT).